The sequence spans 143 residues: EKC/KEOPS complex subunit LAGE3 (143 aa).

The interval 1 to 57 (MRDADADAGGGADGGDGRGGHSCRGGVDTAAAPAGGAPPAHAPGPGRDAASAARGSR) is disordered. Over residues 30 to 55 (AAAPAGGAPPAHAPGPGRDAASAARG) the composition is skewed to low complexity.

Belongs to the CTAG/PCC1 family. Component of the EKC/KEOPS complex composed of at least GON7, TP53RK, TPRKB, OSGEP and LAGE3; the whole complex dimerizes. Ubiquitous.

It localises to the cytoplasm. It is found in the nucleus. In terms of biological role, component of the EKC/KEOPS complex that is required for the formation of a threonylcarbamoyl group on adenosine at position 37 (t(6)A37) in tRNAs that read codons beginning with adenine. The complex is probably involved in the transfer of the threonylcarbamoyl moiety of threonylcarbamoyl-AMP (TC-AMP) to the N6 group of A37. LAGE3 functions as a dimerization module for the complex. This is EKC/KEOPS complex subunit LAGE3 from Homo sapiens (Human).